The following is a 121-amino-acid chain: Ribonuclease P protein component 4 (121 aa).

Positions 63, 66, 89, and 92 each coordinate Zn(2+).

It belongs to the eukaryotic/archaeal RNase P protein component 4 family. In terms of assembly, consists of a catalytic RNA component and at least 4-5 protein subunits. Zn(2+) serves as cofactor.

It is found in the cytoplasm. The catalysed reaction is Endonucleolytic cleavage of RNA, removing 5'-extranucleotides from tRNA precursor.. Its function is as follows. Part of ribonuclease P, a protein complex that generates mature tRNA molecules by cleaving their 5'-ends. The protein is Ribonuclease P protein component 4 of Methanobrevibacter smithii (strain ATCC 35061 / DSM 861 / OCM 144 / PS).